We begin with the raw amino-acid sequence, 64 residues long: DNA gyrase inhibitor YacG (64 aa).

Residues cysteine 6, cysteine 9, cysteine 25, and cysteine 29 each coordinate Zn(2+).

It belongs to the DNA gyrase inhibitor YacG family. As to quaternary structure, interacts with GyrB. Requires Zn(2+) as cofactor.

Functionally, inhibits all the catalytic activities of DNA gyrase by preventing its interaction with DNA. Acts by binding directly to the C-terminal domain of GyrB, which probably disrupts DNA binding by the gyrase. In Haemophilus influenzae (strain ATCC 51907 / DSM 11121 / KW20 / Rd), this protein is DNA gyrase inhibitor YacG.